The sequence spans 357 residues: MAIQSDSLSSLPDSPRIVAPQPVSPNEESIERALRPKALEEYVGQQRAREQLEIFIAAARKRGEALDHVLLFGPPGLGKTTLAHIIAHEMGVQLRQTSGPVLERPGDLAALLTNLERNDVLFIDEIHRLSPVVEEILYPALEDFQIDILIGEGPAARSVKLDLQPFTLVGATTRAGMLTNPLRDRFGIVSRLEFYNTDELARIVTRSASLLNADITADGAHEVARRSRGTPRIANRLLRRVRDYAQVKAHGVIDQDAAGRALAMLDVDPQGLDVMDRKLLEAIVHKFDGGPVGVDSLAAAIGEERDTIEDVIEPYLIQHGYLQRTPRGRTATLTTWRHLGLTPPAAASGGTGELFSK.

Positions Met-1–Pro-15 are enriched in low complexity. A disordered region spans residues Met-1–Ile-30. The tract at residues Asp-13–Tyr-195 is large ATPase domain (RuvB-L). Residues Leu-34, Arg-35, Gly-76, Lys-79, Thr-80, Thr-81, Glu-142–Phe-144, Arg-185, Tyr-195, and Arg-232 each bind ATP. Thr-80 is a Mg(2+) binding site. The segment at Asn-196–Asp-266 is small ATPAse domain (RuvB-S). The head domain (RuvB-H) stretch occupies residues Pro-269–Lys-357. Positions 305, 324, and 329 each coordinate DNA.

The protein belongs to the RuvB family. Homohexamer. Forms an RuvA(8)-RuvB(12)-Holliday junction (HJ) complex. HJ DNA is sandwiched between 2 RuvA tetramers; dsDNA enters through RuvA and exits via RuvB. An RuvB hexamer assembles on each DNA strand where it exits the tetramer. Each RuvB hexamer is contacted by two RuvA subunits (via domain III) on 2 adjacent RuvB subunits; this complex drives branch migration. In the full resolvosome a probable DNA-RuvA(4)-RuvB(12)-RuvC(2) complex forms which resolves the HJ.

It localises to the cytoplasm. It catalyses the reaction ATP + H2O = ADP + phosphate + H(+). Functionally, the RuvA-RuvB-RuvC complex processes Holliday junction (HJ) DNA during genetic recombination and DNA repair, while the RuvA-RuvB complex plays an important role in the rescue of blocked DNA replication forks via replication fork reversal (RFR). RuvA specifically binds to HJ cruciform DNA, conferring on it an open structure. The RuvB hexamer acts as an ATP-dependent pump, pulling dsDNA into and through the RuvAB complex. RuvB forms 2 homohexamers on either side of HJ DNA bound by 1 or 2 RuvA tetramers; 4 subunits per hexamer contact DNA at a time. Coordinated motions by a converter formed by DNA-disengaged RuvB subunits stimulates ATP hydrolysis and nucleotide exchange. Immobilization of the converter enables RuvB to convert the ATP-contained energy into a lever motion, pulling 2 nucleotides of DNA out of the RuvA tetramer per ATP hydrolyzed, thus driving DNA branch migration. The RuvB motors rotate together with the DNA substrate, which together with the progressing nucleotide cycle form the mechanistic basis for DNA recombination by continuous HJ branch migration. Branch migration allows RuvC to scan DNA until it finds its consensus sequence, where it cleaves and resolves cruciform DNA. This is Holliday junction branch migration complex subunit RuvB from Bordetella bronchiseptica (strain ATCC BAA-588 / NCTC 13252 / RB50) (Alcaligenes bronchisepticus).